The chain runs to 103 residues: Large ribosomal subunit protein bL21 (103 aa).

The protein belongs to the bacterial ribosomal protein bL21 family. Part of the 50S ribosomal subunit. Contacts protein L20.

Functionally, this protein binds to 23S rRNA in the presence of protein L20. This chain is Large ribosomal subunit protein bL21, found in Chromobacterium violaceum (strain ATCC 12472 / DSM 30191 / JCM 1249 / CCUG 213 / NBRC 12614 / NCIMB 9131 / NCTC 9757 / MK).